Consider the following 232-residue polypeptide: Thiamine import ATP-binding protein ThiQ (232 aa).

An ABC transporter domain is found at 2 to 230; it reads LKLTDITWLY…KASASALLGI (229 aa). 32–39 contributes to the ATP binding site; the sequence is GPSGAGKS.

This sequence belongs to the ABC transporter superfamily. Thiamine importer (TC 3.A.1.19.1) family. The complex is composed of two ATP-binding proteins (ThiQ), two transmembrane proteins (ThiP) and a solute-binding protein (ThiB).

The protein resides in the cell inner membrane. The catalysed reaction is thiamine(out) + ATP + H2O = thiamine(in) + ADP + phosphate + H(+). Part of the ABC transporter complex ThiBPQ involved in thiamine import. Responsible for energy coupling to the transport system. This chain is Thiamine import ATP-binding protein ThiQ, found in Escherichia coli O6:K15:H31 (strain 536 / UPEC).